The primary structure comprises 239 residues: Purine nucleoside phosphorylase DeoD-type (239 aa).

H5 is a binding site for a purine D-ribonucleoside. Residues G21, R25, R44, and 88-91 contribute to the phosphate site; that span reads RVGS. A purine D-ribonucleoside is bound by residues 180–182 and 204–205; these read EME and SD. D205 functions as the Proton donor in the catalytic mechanism.

This sequence belongs to the PNP/UDP phosphorylase family. As to quaternary structure, homohexamer; trimer of homodimers.

The enzyme catalyses a purine D-ribonucleoside + phosphate = a purine nucleobase + alpha-D-ribose 1-phosphate. It carries out the reaction a purine 2'-deoxy-D-ribonucleoside + phosphate = a purine nucleobase + 2-deoxy-alpha-D-ribose 1-phosphate. Catalyzes the reversible phosphorolytic breakdown of the N-glycosidic bond in the beta-(deoxy)ribonucleoside molecules, with the formation of the corresponding free purine bases and pentose-1-phosphate. The protein is Purine nucleoside phosphorylase DeoD-type of Cronobacter sakazakii (strain ATCC BAA-894) (Enterobacter sakazakii).